Reading from the N-terminus, the 180-residue chain is Large ribosomal subunit protein uL6 (180 aa).

The protein belongs to the universal ribosomal protein uL6 family. In terms of assembly, part of the 50S ribosomal subunit.

This protein binds to the 23S rRNA, and is important in its secondary structure. It is located near the subunit interface in the base of the L7/L12 stalk, and near the tRNA binding site of the peptidyltransferase center. The sequence is that of Large ribosomal subunit protein uL6 from Clostridioides difficile (strain 630) (Peptoclostridium difficile).